The chain runs to 639 residues: Probable serine/threonine-protein kinase DDB_G0282777 (639 aa).

The stretch at 7 to 122 forms a coiled coil; the sequence is LKENKESLKD…EDLKSIILTS (116 aa). The region spanning 233 to 588 is the Protein kinase domain; that stretch reads MHMVGDIKKG…SNNNQNHTNI (356 aa). ATP is bound by residues 239-247 and K284; that span reads IKKGSISSD. D439 functions as the Proton acceptor in the catalytic mechanism. The tract at residues 601–639 is disordered; it reads NTLETSTTNPNTNTTTSDTNTSTTSTTNTNTTTSNTITA.

This sequence belongs to the protein kinase superfamily. Ser/Thr protein kinase family.

It catalyses the reaction L-seryl-[protein] + ATP = O-phospho-L-seryl-[protein] + ADP + H(+). The catalysed reaction is L-threonyl-[protein] + ATP = O-phospho-L-threonyl-[protein] + ADP + H(+). The sequence is that of Probable serine/threonine-protein kinase DDB_G0282777 from Dictyostelium discoideum (Social amoeba).